Consider the following 156-residue polypeptide: Endoribonuclease YbeY (156 aa).

H114, H118, and H124 together coordinate Zn(2+).

It belongs to the endoribonuclease YbeY family. Requires Zn(2+) as cofactor.

It is found in the cytoplasm. Single strand-specific metallo-endoribonuclease involved in late-stage 70S ribosome quality control and in maturation of the 3' terminus of the 16S rRNA. The chain is Endoribonuclease YbeY from Sodalis glossinidius (strain morsitans).